The sequence spans 396 residues: Probable porphobilinogen deaminase (396 aa).

The segment at 159-224 (APALHREHER…DTASSSEFEQ (66 aa)) is disordered. Positions 159 to 245 (APALHREHER…LQQSAMERDP (87 aa)) are insert. Positions 162-189 (LHREHERRTEAEKEAQSRDAREQRRGDY) are enriched in basic and acidic residues. The span at 200–215 (LDTEDGEEGAADDGDD) shows a compositional bias: acidic residues. Cys328 carries the S-(dipyrrolylmethanemethyl)cysteine modification.

It belongs to the HMBS family. It depends on dipyrromethane as a cofactor.

It catalyses the reaction 4 porphobilinogen + H2O = hydroxymethylbilane + 4 NH4(+). It participates in porphyrin-containing compound metabolism; protoporphyrin-IX biosynthesis; coproporphyrinogen-III from 5-aminolevulinate: step 2/4. Functionally, tetrapolymerization of the monopyrrole PBG into the hydroxymethylbilane pre-uroporphyrinogen in several discrete steps. The protein is Probable porphobilinogen deaminase (hemC) of Halobacterium salinarum (strain ATCC 700922 / JCM 11081 / NRC-1) (Halobacterium halobium).